The chain runs to 248 residues: 26.2 kDa heat shock protein, mitochondrial (248 aa).

The N-terminal 32 residues, 1 to 32 (MASTVALKGRPLATLLRQLLAADAPPAATGRP), are a transit peptide targeting the mitochondrion. Positions 26 to 48 (PAATGRPVAAAPAASGKPVTAPA) are disordered. The sHSP domain maps to 139 to 248 (ATAAARRGGW…RKDVFQVNVE (110 aa)).

The protein belongs to the small heat shock protein (HSP20) family. As to quaternary structure, may form oligomeric structures.

The protein resides in the mitochondrion. In Oryza sativa subsp. japonica (Rice), this protein is 26.2 kDa heat shock protein, mitochondrial (HSP26.2).